Here is a 962-residue protein sequence, read N- to C-terminus: Glycine dehydrogenase (decarboxylating) (962 aa).

Lysine 709 carries the post-translational modification N6-(pyridoxal phosphate)lysine.

This sequence belongs to the GcvP family. The glycine cleavage system is composed of four proteins: P, T, L and H. Requires pyridoxal 5'-phosphate as cofactor.

It catalyses the reaction N(6)-[(R)-lipoyl]-L-lysyl-[glycine-cleavage complex H protein] + glycine + H(+) = N(6)-[(R)-S(8)-aminomethyldihydrolipoyl]-L-lysyl-[glycine-cleavage complex H protein] + CO2. Its function is as follows. The glycine cleavage system catalyzes the degradation of glycine. The P protein binds the alpha-amino group of glycine through its pyridoxal phosphate cofactor; CO(2) is released and the remaining methylamine moiety is then transferred to the lipoamide cofactor of the H protein. The polypeptide is Glycine dehydrogenase (decarboxylating) (Shewanella sp. (strain MR-4)).